Here is a 407-residue protein sequence, read N- to C-terminus: Phosphopentomutase (407 aa).

Positions 10, 306, 311, 347, 348, and 359 each coordinate Mn(2+).

The protein belongs to the phosphopentomutase family. Mn(2+) is required as a cofactor.

The protein resides in the cytoplasm. The catalysed reaction is 2-deoxy-alpha-D-ribose 1-phosphate = 2-deoxy-D-ribose 5-phosphate. It catalyses the reaction alpha-D-ribose 1-phosphate = D-ribose 5-phosphate. It participates in carbohydrate degradation; 2-deoxy-D-ribose 1-phosphate degradation; D-glyceraldehyde 3-phosphate and acetaldehyde from 2-deoxy-alpha-D-ribose 1-phosphate: step 1/2. Its function is as follows. Isomerase that catalyzes the conversion of deoxy-ribose 1-phosphate (dRib-1-P) and ribose 1-phosphate (Rib-1-P) to deoxy-ribose 5-phosphate (dRib-5-P) and ribose 5-phosphate (Rib-5-P), respectively. In Salmonella schwarzengrund (strain CVM19633), this protein is Phosphopentomutase.